Here is a 51-residue protein sequence, read N- to C-terminus: Defensin-like protein 2A (51 aa).

A Pyrrolidone carboxylic acid modification is found at glutamine 1. Cystine bridges form between cysteine 4/cysteine 51, cysteine 15/cysteine 36, cysteine 21/cysteine 45, and cysteine 25/cysteine 47. At serine 8 the chain carries Phosphoserine; by CPK.

In terms of assembly, forms oligomers in its native state.

Functionally, possesses antifungal activity sensitive to inorganic cations. This is Defensin-like protein 2A from Sinapis alba (White mustard).